A 384-amino-acid polypeptide reads, in one-letter code: Sphingosine kinase 1 (384 aa).

In terms of domain architecture, DAGKc spans 12 to 159; the sequence is PRPCRVLVLL…MNLLSLHTAS (148 aa). ATP is bound by residues 22–24 and 54–58; these read NPR and TERRN. Substrate is bound at residue 79–82; the sequence is SGDG. Aspartate 81 (proton donor/acceptor) is an active-site residue. ATP is bound by residues glutamate 86 and 111 to 113; that span reads GSG. 2 consecutive short sequence motifs (nuclear export signal) follow at residues 147-155 and 161-169; these read LSPMNLLSL and LRLFSVLSL. Aspartate 178 is a binding site for substrate. Residues arginine 185 and arginine 191 each contribute to the ATP site. Position 193 is a phosphothreonine (threonine 193). The residue at position 225 (serine 225) is a Phosphoserine. ATP is bound at residue 341–343; that stretch reads DGE.

In terms of assembly, interacts with ACY1. Binds to calmodulin. Interacts with SPHKAP. Interacts with CIB1, the interaction occurs in a calcium-dependent manner. Interacts with TRAF2. Interacts with EEF1A1; the interaction enhances SPHK1 kinase activity. It depends on Mg(2+) as a cofactor. In terms of tissue distribution, widely expressed with highest levels in adult liver, kidney, heart and skeletal muscle. Expressed in brain cortex (at protein level).

The protein resides in the cytoplasm. It localises to the nucleus. Its subcellular location is the cell membrane. The protein localises to the endosome membrane. It is found in the membrane. The protein resides in the clathrin-coated pit. It localises to the synapse. The catalysed reaction is a sphingoid base + ATP = a sphingoid 1-phosphate + ADP + H(+). It carries out the reaction L-seryl-[protein] + acetyl-CoA = O-acetyl-L-seryl-[protein] + CoA. It catalyses the reaction sphinganine + ATP = sphinganine 1-phosphate + ADP + H(+). The enzyme catalyses sphing-4-enine + ATP = sphing-4-enine 1-phosphate + ADP + H(+). The catalysed reaction is 1-O-hexadecyl-2-amino-sn-glycerol + ATP = 1-O-hexadecyl-2-desoxy-2-amino-sn-glycero-3-phosphate + ADP + H(+). Acetyltransferase activity increases in presence of the kinase substrate, sphingosine. In Purkinje cells, kinase activity on sphingosine increases in presence of VEGFA. In neurons, kinase activity increases during the first 24h in presence of Amyloid-beta protein 42 to decrease after 96h. Catalyzes the phosphorylation of sphingosine to form sphingosine 1-phosphate (SPP), a lipid mediator with both intra- and extracellular functions. Also acts on D-erythro-sphingosine and to a lesser extent sphinganine, but not other lipids, such as D,L-threo-dihydrosphingosine, N,N-dimethylsphingosine, diacylglycerol, ceramide, or phosphatidylinositol. In contrast to proapoptotic SPHK2, has a negative effect on intracellular ceramide levels, enhances cell growth and inhibits apoptosis. Involved in the regulation of inflammatory response and neuroinflammation. Via the product sphingosine 1-phosphate, stimulates TRAF2 E3 ubiquitin ligase activity, and promotes activation of NF-kappa-B in response to TNF signaling leading to IL17 secretion. In response to TNF and in parallel to NF-kappa-B activation, negatively regulates RANTES induction through p38 MAPK signaling pathway. Involved in endocytic membrane trafficking induced by sphingosine, recruited to dilate endosomes, also plays a role on later stages of endosomal maturation and membrane fusion independently of its kinase activity. In Purkinje cells, seems to be also involved in the regulation of autophagosome-lysosome fusion upon VEGFA. Functionally, has serine acetyltransferase activity on PTGS2/COX2 in an acetyl-CoA dependent manner. The acetyltransferase activity increases in presence of the kinase substrate, sphingosine. During neuroinflammation, through PTGS2 acetylation, promotes neuronal secretion of specialized preresolving mediators (SPMs), especially 15-R-lipoxin A4, which results in an increase of phagocytic microglia. This is Sphingosine kinase 1 from Homo sapiens (Human).